Here is a 481-residue protein sequence, read N- to C-terminus: Trigger factor (481 aa).

The region spanning 174 to 261 (GDIAVVGFKG…LKDLKTRELP (88 aa)) is the PPIase FKBP-type domain. The segment at 430 to 481 (ENSTVTEKAPEAESDAAKASKPAAAKKDASKAKTAKTSKAKTAKAESESAES) is disordered. Basic and acidic residues predominate over residues 437–447 (KAPEAESDAAK). The span at 462 to 471 (KTAKTSKAKT) shows a compositional bias: basic residues. A compositionally biased stretch (basic and acidic residues) spans 472-481 (AKAESESAES).

This sequence belongs to the FKBP-type PPIase family. Tig subfamily.

The protein resides in the cytoplasm. It catalyses the reaction [protein]-peptidylproline (omega=180) = [protein]-peptidylproline (omega=0). Functionally, involved in protein export. Acts as a chaperone by maintaining the newly synthesized protein in an open conformation. Functions as a peptidyl-prolyl cis-trans isomerase. The protein is Trigger factor of Synechococcus sp. (strain WH7803).